The primary structure comprises 470 residues: Zinc finger protein pat-9 (470 aa).

A disordered region spans residues 1-25 (MENRTPMQHHSGYEIVKSEPPSTPK). 3 consecutive C2H2-type zinc fingers follow at residues 84-106 (YPCN…QNSH), 112-134 (FECD…KRIH), and 140-162 (FVCT…KDMH). Positions 191–235 (MEQEENGGLPASSSASSVISHPLITTTSGNKKRSKAAKAKQTPSS) are disordered. Residues 221 to 230 (KKRSKAAKAK) carry the Nuclear localization signal motif.

Belongs to the krueppel C2H2-type zinc-finger protein family. As to expression, expressed in body wall muscle and gonad (at protein level).

The protein localises to the nucleus. It localises to the chromosome. In terms of biological role, probable transcription factor; required for proper organization of muscle myofilaments and for their recruitment to the M line. The polypeptide is Zinc finger protein pat-9 (Caenorhabditis elegans).